The chain runs to 265 residues: Glutamate racemase (265 aa).

Substrate is bound by residues 10 to 11 and 42 to 43; these read DS and YG. Cys-73 serves as the catalytic Proton donor/acceptor. 74-75 provides a ligand contact to substrate; that stretch reads NT. The active-site Proton donor/acceptor is the Cys-180. Residue 181-182 coordinates substrate; sequence TH.

The protein belongs to the aspartate/glutamate racemases family.

It carries out the reaction L-glutamate = D-glutamate. Its pathway is cell wall biogenesis; peptidoglycan biosynthesis. Functionally, provides the (R)-glutamate required for cell wall biosynthesis. This chain is Glutamate racemase, found in Synechococcus sp. (strain CC9605).